Here is a 370-residue protein sequence, read N- to C-terminus: mRNA cap guanine-N(7) methyltransferase 1 (370 aa).

Residues 1–11 (MKRGFSDSPSS) are compositionally biased toward low complexity. The disordered stretch occupies residues 1–34 (MKRGFSDSPSSSAPPPSSRFKSNPEGDSQFLEDE). Residues 61–341 (SPIIHLKKLN…LYLSFVLRKR (281 aa)) enclose the mRNA cap 0 methyltransferase domain. Position 70–71 (70–71 (NN)) interacts with mRNA. Residues Lys-74, Ala-92, Asp-114, 150–151 (DC), and 172–174 (QFA) each bind S-adenosyl-L-methionine.

It belongs to the class I-like SAM-binding methyltransferase superfamily. mRNA cap 0 methyltransferase family.

The protein localises to the nucleus. The catalysed reaction is a 5'-end (5'-triphosphoguanosine)-ribonucleoside in mRNA + S-adenosyl-L-methionine = a 5'-end (N(7)-methyl 5'-triphosphoguanosine)-ribonucleoside in mRNA + S-adenosyl-L-homocysteine. In terms of biological role, mRNA-capping methyltransferase that methylates the N7 position of the added guanosine to the 5'-cap structure of mRNAs. Binds RNA containing 5'-terminal GpppC. This chain is mRNA cap guanine-N(7) methyltransferase 1, found in Arabidopsis thaliana (Mouse-ear cress).